An 840-amino-acid chain; its full sequence is Heat shock 70 kDa protein 4 (840 aa).

An N6-acetyllysine modification is found at lysine 53. Position 76 is a phosphoserine (serine 76). Phosphotyrosine is present on residues tyrosine 89 and tyrosine 336. Phosphoserine occurs at positions 393 and 415. Lysine 430 bears the N6-acetyllysine mark. Residues 500 to 575 (VHKSEENEEP…QAKKAKVKTS (76 aa)) form a disordered region. The span at 514 to 533 (QNAKEEEKMQVDQEEPHVEE) shows a compositional bias: basic and acidic residues. Position 538 is a phosphothreonine (threonine 538). A phosphoserine mark is found at serine 546 and serine 647. Position 660 is a phosphotyrosine (tyrosine 660). At lysine 679 the chain carries N6-acetyllysine. Serine 756 bears the Phosphoserine mark. At lysine 773 the chain carries N6-methyllysine. The interval 779–840 (CSPIISKPKP…DKKLPEMDID (62 aa)) is disordered. Composition is skewed to basic and acidic residues over residues 788-799 (PKVEPPKEEQKN) and 829-840 (DSDKKLPEMDID).

The protein belongs to the heat shock protein 70 family. As to quaternary structure, interacts with TJP1/ZO-1.

It is found in the cytoplasm. The sequence is that of Heat shock 70 kDa protein 4 (HSPA4) from Homo sapiens (Human).